Reading from the N-terminus, the 277-residue chain is Heme oxygenase (277 aa).

His-29 is a binding site for heme b.

This sequence belongs to the heme oxygenase family.

The protein resides in the microsome. Its subcellular location is the endoplasmic reticulum. It carries out the reaction heme b + 3 reduced [NADPH--hemoprotein reductase] + 3 O2 = biliverdin IXalpha + CO + Fe(2+) + 3 oxidized [NADPH--hemoprotein reductase] + 3 H2O + H(+). Heme oxygenase cleaves the heme ring at the alpha methene bridge to form biliverdin. Biliverdin is subsequently converted to bilirubin by biliverdin reductase. Under physiological conditions, the activity of heme oxygenase is highest in the spleen, where senescent erythrocytes are sequestrated and destroyed. The sequence is that of Heme oxygenase (hmox) from Takifugu rubripes (Japanese pufferfish).